We begin with the raw amino-acid sequence, 129 residues long: Lysozyme C-1 (129 aa).

The C-type lysozyme domain occupies 1-129 (KVFERCELAR…VSSYVEGCTL (129 aa)). Cystine bridges form between Cys6/Cys127, Cys30/Cys115, Cys65/Cys81, and Cys77/Cys95. Catalysis depends on residues Glu35 and Asp53.

Belongs to the glycosyl hydrolase 22 family. Monomer.

The catalysed reaction is Hydrolysis of (1-&gt;4)-beta-linkages between N-acetylmuramic acid and N-acetyl-D-glucosamine residues in a peptidoglycan and between N-acetyl-D-glucosamine residues in chitodextrins.. In terms of biological role, lysozymes have primarily a bacteriolytic function; those in tissues and body fluids are associated with the monocyte-macrophage system and enhance the activity of immunoagents. This is Lysozyme C-1 from Capra hircus (Goat).